The chain runs to 179 residues: ATP-dependent protease subunit HslV (179 aa).

The active site involves Thr7. Gly162, Cys165, and Thr168 together coordinate Na(+).

The protein belongs to the peptidase T1B family. HslV subfamily. In terms of assembly, a double ring-shaped homohexamer of HslV is capped on each side by a ring-shaped HslU homohexamer. The assembly of the HslU/HslV complex is dependent on binding of ATP.

It localises to the cytoplasm. The catalysed reaction is ATP-dependent cleavage of peptide bonds with broad specificity.. Allosterically activated by HslU binding. Functionally, protease subunit of a proteasome-like degradation complex believed to be a general protein degrading machinery. This is ATP-dependent protease subunit HslV from Bordetella pertussis (strain Tohama I / ATCC BAA-589 / NCTC 13251).